A 205-amino-acid polypeptide reads, in one-letter code: MWRMRGGATRRGSCGGEGGGSRGESGRLGRAREGGGGGGGVGWRGRAGGARRQLEERFADLAASHLEALRARDERDRQNARLREENARLRLENRRLRRENRSLFRQALRLPGDSGEREAAVETLAPDEPATNRKARGHGREEEPGSPRALRARLEKLEVMYRRALLQLHLEQQGARPPGAIEEPPLQETATGLCAHDPDVPRPWL.

A compositionally biased stretch (low complexity) spans 1–12; sequence MWRMRGGATRRG. A disordered region spans residues 1 to 49; that stretch reads MWRMRGGATRRGSCGGEGGGSRGESGRLGRAREGGGGGGGVGWRGRAGG. Positions 13-23 are enriched in gly residues; sequence SCGGEGGGSRG. Over residues 24-33 the composition is skewed to basic and acidic residues; sequence ESGRLGRARE. Positions 34-48 are enriched in gly residues; the sequence is GGGGGGGVGWRGRAG. The stretch at 66–110 forms a coiled coil; sequence LEALRARDERDRQNARLREENARLRLENRRLRRENRSLFRQALRL. 2 disordered regions span residues 113 to 149 and 174 to 205; these read DSGE…SPRA and GARP…RPWL. A Phosphoserine modification is found at Ser-146. Positions 196 to 205 are enriched in basic and acidic residues; the sequence is HDPDVPRPWL.

The chain is Tumor suppressor candidate gene 1 protein homolog (Tusc1) from Mus musculus (Mouse).